The chain runs to 509 residues: Zinc metalloproteinase aureolysin (509 aa).

Positions 1-27 (MRKFSRYAFTSMATVTLLSSLTPAALA) are cleaved as a signal peptide. Residues 28–208 (SDTNHKPATS…VVEKTNLVKE (181 aa)) constitute a propeptide that is removed on maturation. Asp-348 lines the Ca(2+) pocket. His-352 contacts Zn(2+). Glu-353 is an active-site residue. Residues His-356 and Glu-376 each contribute to the Zn(2+) site. Ca(2+) is bound by residues Asp-387, Glu-389, Asp-390, Leu-392, Glu-395, Tyr-398, Thr-399, Lys-402, and Asp-405. His-436 acts as the Proton donor in catalysis.

This sequence belongs to the peptidase M4 family. Monomer. It depends on Ca(2+) as a cofactor. Zn(2+) is required as a cofactor.

The enzyme catalyses Cleavage of insulin B chain with specificity similar to that of thermolysin, preferring hydrophobic P1' residues. Activates the glutamyl endopeptidase (EC 3.4.21.19) of Staphylococcus aureus.. In terms of biological role, plays an essential role in immune evasion by helping bacteria to resist complement-mediated killing by neutrophils. Inhibits the deposition of host C3b on bacterial surfaces and the release of the chemoattractant C5a by cleaving the central complement protein C3. The cleavage site renders the C3b molecule vulnerable to proteolytic degradation by host regulators. Cleaves and inactivates host SERPINA1, which is an endogenous protease inhibitor essential for controlling neutrophil serine protease elastase. Also plays an essential role in the cleavage and subsequent activation of the serine protease SspA (glutamyl endopeptidase) which is involved in colonization and infection of human tissues. This is Zinc metalloproteinase aureolysin from Staphylococcus aureus.